We begin with the raw amino-acid sequence, 631 residues long: Forkhead box protein O1 (631 aa).

Pro residues predominate over residues 1–11; the sequence is MAEAPQPPPPL. 4 disordered regions span residues 1 to 57, 90 to 147, 223 to 324, and 372 to 404; these read MAEA…PAAG, DIRQ…SRRN, SSWW…MPEQ, and PNSS…PNSE. 2 stretches are compositionally biased toward low complexity: residues 37-48 and 100-135; these read NPSSSANSSPAP and QQQQ…PLGA. Residues 149–243 constitute a DNA-binding region (fork-head); the sequence is WGNLSYADLI…KNGKSPRRRA (95 aa). Basic residues predominate over residues 253–264; that stretch reads AKSRGRAAKKKA. Over residues 265 to 282 the composition is skewed to low complexity; that stretch reads SMQSSQDGSSDSPGSQFS. 2 stretches are compositionally biased toward polar residues: residues 303–315 and 381–403; these read RPRT…TISG and ASMM…SPNS.

Phosphorylated by AKT1; insulin-induced. In terms of processing, IGF1 rapidly induces phosphorylation of Thr-28, Ser-245 and Ser-308. Phosphorylation of Ser-245 decreases DNA-binding activity and promotes the phosphorylation of Thr-28, and Ser-308, which leads to nuclear exclusion and loss of function. Phosphorylation of Ser-318 is independent of IGF1 and leads to reduced function. Localized to the animal hemisphere during early cleavage stages. At early tadpole stages, expressed in the branchial arches, pronephros and liver. Within the head, expressed in the forming thyroid gland and in head mesenchyme anterior to the eyes.

It localises to the cytoplasm. The protein resides in the nucleus. Transcription factor that regulates metabolic homeostasis in response to oxidative stress. Binds to the consensus sequence 5'-TT[G/A]TTTTG-3' and the related Daf-16 family binding element (DBE) with consensus sequence 5'-TT[G/A]TTTAC-3'. Main regulator of redox balance and osteoblast numbers and controls bone mass. Orchestrates the endocrine function of the skeleton in regulating glucose metabolism. Also acts as a key regulator of chondrogenic commitment of skeletal progenitor cells in response to lipid availability: when lipids levels are low, translocates to the nucleus and promotes expression of sox9, which induces chondrogenic commitment and suppresses fatty acid oxidation. Acts synergistically with atf4 to suppress osteocalcin/bglap activity, increasing glucose levels and triggering glucose intolerance and insulin insensitivity. Also suppresses the transcriptional activity of runx2, an upstream activator of osteocalcin/bglap. May act as a positive regulator of apoptosis in cardiac smooth muscle cells as a result of its transcriptional activation of pro-apoptotic genes. This is Forkhead box protein O1 from Xenopus laevis (African clawed frog).